Consider the following 60-residue polypeptide: MKNTILLLFTAFIFLSGFFGMSAEALADPKADPLAGPFPDADPDPINMKASAAVAKKLLG.

The signal sequence occupies residues 1–23 (MKNTILLLFTAFIFLSGFFGMSA). Residues 24 to 45 (EALADPKADPLAGPFPDADPDP) constitute a propeptide that is removed on maturation. AXPX repeat units follow at residues 27 to 30 (ADPK), 31 to 34 (ADPL), 35 to 38 (AGPF), and 40 to 43 (DADP). A Leucine amide modification is found at leucine 59.

Expressed by the venom gland.

The protein resides in the secreted. It localises to the target cell membrane. Its function is as follows. Antimicrobial peptide. Shows activity against both Gram-positive (S.aureus MIC=1.9-3.75 ug/ml) and -negative (E.coli MIC=15-60 ug/ml) bacteria, as well against fungi (C.albicans MIC=15 ug/ml). Also promotes moderate mast cell degranulation. Does not show hemolytic activity on rabbit and human erythrocytes. Its mast cell degranulation activity may be related to the activation of G-protein coupled receptors in mast cells as well as interaction with other proteins located in cell endosomal membranes in the mast cells. This Vespa bicolor (Black shield wasp) protein is Mastoparan-VB1.